The chain runs to 70 residues: DNA-directed RNA polymerase subunit omega (70 aa).

Belongs to the RNA polymerase subunit omega family. In terms of assembly, the RNAP catalytic core consists of 2 alpha, 1 beta, 1 beta' and 1 omega subunit. When a sigma factor is associated with the core the holoenzyme is formed, which can initiate transcription.

It carries out the reaction RNA(n) + a ribonucleoside 5'-triphosphate = RNA(n+1) + diphosphate. Promotes RNA polymerase assembly. Latches the N- and C-terminal regions of the beta' subunit thereby facilitating its interaction with the beta and alpha subunits. This is DNA-directed RNA polymerase subunit omega from Bacillus cereus (strain B4264).